A 289-amino-acid polypeptide reads, in one-letter code: ATP synthase gamma chain (289 aa).

Belongs to the ATPase gamma chain family. F-type ATPases have 2 components, CF(1) - the catalytic core - and CF(0) - the membrane proton channel. CF(1) has five subunits: alpha(3), beta(3), gamma(1), delta(1), epsilon(1). CF(0) has three main subunits: a, b and c.

Its subcellular location is the cell inner membrane. Functionally, produces ATP from ADP in the presence of a proton gradient across the membrane. The gamma chain is believed to be important in regulating ATPase activity and the flow of protons through the CF(0) complex. The chain is ATP synthase gamma chain from Histophilus somni (strain 2336) (Haemophilus somnus).